The following is a 546-amino-acid chain: Chaperonin GroEL (546 aa).

ATP contacts are provided by residues Thr29–Pro32, Lys50, Asp86–Thr90, Gly414, Asn477–Leu479, and Asp493.

This sequence belongs to the chaperonin (HSP60) family. In terms of assembly, forms a cylinder of 14 subunits composed of two heptameric rings stacked back-to-back. Interacts with the co-chaperonin GroES.

Its subcellular location is the cytoplasm. The catalysed reaction is ATP + H2O + a folded polypeptide = ADP + phosphate + an unfolded polypeptide.. Its function is as follows. Together with its co-chaperonin GroES, plays an essential role in assisting protein folding. The GroEL-GroES system forms a nano-cage that allows encapsulation of the non-native substrate proteins and provides a physical environment optimized to promote and accelerate protein folding. In Leptospira interrogans serogroup Icterohaemorrhagiae serovar Lai (strain 56601), this protein is Chaperonin GroEL.